We begin with the raw amino-acid sequence, 153 residues long: Nucleoside diphosphate kinase (153 aa).

ATP-binding residues include lysine 13, phenylalanine 61, arginine 89, threonine 95, arginine 106, and asparagine 116. Histidine 119 acts as the Pros-phosphohistidine intermediate in catalysis.

The protein belongs to the NDK family. As to quaternary structure, homohexamer. Mg(2+) is required as a cofactor.

The protein localises to the cytoplasm. It catalyses the reaction a 2'-deoxyribonucleoside 5'-diphosphate + ATP = a 2'-deoxyribonucleoside 5'-triphosphate + ADP. The catalysed reaction is a ribonucleoside 5'-diphosphate + ATP = a ribonucleoside 5'-triphosphate + ADP. In terms of biological role, major role in the synthesis of nucleoside triphosphates other than ATP. The ATP gamma phosphate is transferred to the NDP beta phosphate via a ping-pong mechanism, using a phosphorylated active-site intermediate. The polypeptide is Nucleoside diphosphate kinase (NDK) (Brugia malayi (Filarial nematode worm)).